The primary structure comprises 154 residues: Endoribonuclease YbeY (154 aa).

Zn(2+) contacts are provided by H114, H118, and H124.

It belongs to the endoribonuclease YbeY family. Zn(2+) serves as cofactor.

Its subcellular location is the cytoplasm. In terms of biological role, single strand-specific metallo-endoribonuclease involved in late-stage 70S ribosome quality control and in maturation of the 3' terminus of the 16S rRNA. The chain is Endoribonuclease YbeY from Marinomonas sp. (strain MWYL1).